The following is a 245-amino-acid chain: 1-(5-phosphoribosyl)-5-[(5-phosphoribosylamino)methylideneamino] imidazole-4-carboxamide isomerase (245 aa).

Asp8 (proton acceptor) is an active-site residue. The active-site Proton donor is Asp129.

This sequence belongs to the HisA/HisF family.

The protein localises to the cytoplasm. It catalyses the reaction 1-(5-phospho-beta-D-ribosyl)-5-[(5-phospho-beta-D-ribosylamino)methylideneamino]imidazole-4-carboxamide = 5-[(5-phospho-1-deoxy-D-ribulos-1-ylimino)methylamino]-1-(5-phospho-beta-D-ribosyl)imidazole-4-carboxamide. Its pathway is amino-acid biosynthesis; L-histidine biosynthesis; L-histidine from 5-phospho-alpha-D-ribose 1-diphosphate: step 4/9. In Pelobacter propionicus (strain DSM 2379 / NBRC 103807 / OttBd1), this protein is 1-(5-phosphoribosyl)-5-[(5-phosphoribosylamino)methylideneamino] imidazole-4-carboxamide isomerase.